The primary structure comprises 477 residues: SH3 domain-binding protein 5 homolog (477 aa).

Residues 12–95 adopt a coiled-coil conformation; sequence QIQIELENLN…AAVKFQRANE (84 aa). 2 positions are modified to phosphoserine: Ser-113 and Ser-115. Residues 122-221 adopt a coiled-coil conformation; sequence NAWQEMLNHA…YSTALRNLER (100 aa). 2 disordered regions span residues 224 to 258 and 276 to 306; these read EDIHRQRGDFPTPPGPREPGVGAELNSPTSSALPS and GSQMSLGAKTPQAAAETEDEEDACDYDETGA. Acidic residues predominate over residues 291–305; that stretch reads ETEDEEDACDYDETG.

This sequence belongs to the SH3BP5 family.

This Drosophila melanogaster (Fruit fly) protein is SH3 domain-binding protein 5 homolog (pcs).